The primary structure comprises 155 residues: Small ribosomal subunit protein uS9 (155 aa).

It belongs to the universal ribosomal protein uS9 family.

This Rhizobium etli (strain CIAT 652) protein is Small ribosomal subunit protein uS9.